Here is a 280-residue protein sequence, read N- to C-terminus: MLGQQQQQLYSSAALLTGERSRLLTCYVQDYLECVESLPHDMQRNVSVLRELDNKYQETLKEIDDVYEKYKKEDDLNQKKRLQQLLQRALINSQELGDEKIQIVTQMLELVENRARQMELHSQCFQDPAESERASDKAKMDSSQPERSSRRPRRQRTSESRDLCHMANGIEDCDDQPPKEKKSKSAKKKKRSKAKQEREASPVEFAIDPNEPTYCLCNQVSYGEMIGCDNEQCPIEWFHFSCVSLTYKPKGKWYCPKCRGDNEKTMDKSTEKTKKDRRSR.

Residues 48 to 120 (VLRELDNKYQ…VENRARQMEL (73 aa)) are a coiled coil. A disordered region spans residues 122–204 (SQCFQDPAES…KQEREASPVE (83 aa)). Basic and acidic residues predominate over residues 130–140 (ESERASDKAKM). A compositionally biased stretch (basic residues) spans 181 to 193 (KKSKSAKKKKRSK). K195 is covalently cross-linked (Glycyl lysine isopeptide (Lys-Gly) (interchain with G-Cter in SUMO1)). Residues 212–261 (PTYCLCNQVSYGEMIGCDNEQCPIEWFHFSCVSLTYKPKGKWYCPKCRGD) form a PHD-type zinc finger. Zn(2+)-binding residues include C215, C217, C228, C233, H239, C242, C255, and C258. Positions 258–274 (CRGDNEKTMDKSTEKTK) are enriched in basic and acidic residues. Positions 258–280 (CRGDNEKTMDKSTEKTKKDRRSR) are disordered. Residues 264-280 (KTMDKSTEKTKKDRRSR) are PBR.

It belongs to the ING family. As to quaternary structure, interacts with H3K4me3 and to a lesser extent with H3K4me2. Component of a mSin3A-like complex at least consisting of SIN3A, HDAC1, HDAC2, RBBP4/RbAp48, RBBP7/RbAp46, SAP30 and ING2. In terms of processing, sumoylation enhances its association with SIN3A and is required for binding to some target gene promoters, this is the case for TMEM71. Widely expressed. Higher expressed in colon-cancer tumor than in normal colon tissues.

The protein resides in the nucleus. Its function is as follows. Seems to be involved in p53/TP53 activation and p53/TP53-dependent apoptotic pathways, probably by enhancing acetylation of p53/TP53. Component of a mSin3A-like corepressor complex, which is probably involved in deacetylation of nucleosomal histones. ING2 activity seems to be modulated by binding to phosphoinositides (PtdInsPs). The sequence is that of Inhibitor of growth protein 2 (ING2) from Homo sapiens (Human).